Here is a 239-residue protein sequence, read N- to C-terminus: RNA polymerase sigma-E factor (239 aa).

Positions 1–29 (MKKLKLRLTHLWYKLLMKLGLKSDEVYYI) are cleaved as a propeptide — removed by SpoIIGA. Residues 86–99 (DLISIGTIGLIKAV) carry the Polymerase core binding motif. The H-T-H motif DNA-binding region spans 206–225 (QKDVADMMGISQSYISRLEK).

Belongs to the sigma-70 factor family. Post-translationally, proteolytically cleaved in the N-terminus by SpoIIGA to yield the active peptide.

Sigma factors are initiation factors that promote the attachment of RNA polymerase to specific initiation sites and are then released. This sigma factor is responsible for the expression of sporulation specific genes. This is RNA polymerase sigma-E factor (sigE) from Bacillus subtilis (strain 168).